A 92-amino-acid polypeptide reads, in one-letter code: DNA-directed RNA polymerase subunit omega (92 aa).

Belongs to the RNA polymerase subunit omega family. In terms of assembly, the RNAP catalytic core consists of 2 alpha, 1 beta, 1 beta' and 1 omega subunit. When a sigma factor is associated with the core the holoenzyme is formed, which can initiate transcription.

It catalyses the reaction RNA(n) + a ribonucleoside 5'-triphosphate = RNA(n+1) + diphosphate. In terms of biological role, promotes RNA polymerase assembly. Latches the N- and C-terminal regions of the beta' subunit thereby facilitating its interaction with the beta and alpha subunits. The polypeptide is DNA-directed RNA polymerase subunit omega (Corynebacterium diphtheriae (strain ATCC 700971 / NCTC 13129 / Biotype gravis)).